A 354-amino-acid chain; its full sequence is NADH-ubiquinone oxidoreductase chain 1 (354 aa).

A run of 8 helical transmembrane segments spans residues 43-63, 108-128, 139-159, 180-200, 211-231, 264-284, 298-318, and 334-354; these read LFWSLSFYVVVLLSVAYLTLF, PALFFLGPCFMLLHSFILWGC, FFWGGLYVLSVLSVGVYGVVL, VISYEVMLVFLYLCPFFVVGS, VSGCNGGVLFLVLPWWVFCVL, IFIAEYSNILFLSTLTSVLFL, LISSSVIGSFFSFMVVFLIVL, and LIWCQILPILMSCFALFLMII.

It belongs to the complex I subunit 1 family.

The protein localises to the mitochondrion inner membrane. It carries out the reaction a ubiquinone + NADH + 5 H(+)(in) = a ubiquinol + NAD(+) + 4 H(+)(out). Core subunit of the mitochondrial membrane respiratory chain NADH dehydrogenase (Complex I) that is believed to belong to the minimal assembly required for catalysis. Complex I functions in the transfer of electrons from NADH to the respiratory chain. The immediate electron acceptor for the enzyme is believed to be ubiquinone. The chain is NADH-ubiquinone oxidoreductase chain 1 (ND1) from Pecten maximus (King scallop).